Consider the following 234-residue polypeptide: Ankyrin repeat-containing protein C6C3.08 (234 aa).

5 ANK repeats span residues 36 to 66 (DKRT…KPDE), 70 to 100 (AGWT…DVDP), 106 to 135 (GGQT…ELIR), 140 to 169 (QGQT…PLNT), and 173 to 203 (YGFT…TLRK).

This is Ankyrin repeat-containing protein C6C3.08 from Schizosaccharomyces pombe (strain 972 / ATCC 24843) (Fission yeast).